Here is a 238-residue protein sequence, read N- to C-terminus: Cysteine-rich venom protein pseudechetoxin-like (238 aa).

An N-terminal signal peptide occupies residues 1–19 (MIAFIVLLSLAAVLQQSSG). Residues 20-28 (TVDFASESS) constitute a propeptide that is removed on maturation. The region spanning 38–164 (VDKHNDLRRS…STKYLYVCQY (127 aa)) is the SCP domain. Disulfide bonds link C75–C153, C92–C165, C148–C162, C184–C191, C187–C196, C200–C233, C209–C227, and C218–C231. The ShKT domain occupies 200–233 (CKHNDDLSNCKPLAKKSKCQTEWIKSKCPATCFC).

This sequence belongs to the CRISP family. As to expression, expressed by the venom gland.

The protein localises to the secreted. Functionally, blocks olfactory (CNGA2) and retinal (CNGA1) CNG channel currents. Does not affect neither depolarization- nor caffeine-induced contraction of smooth muscle. This is Cysteine-rich venom protein pseudechetoxin-like from Oxyuranus microlepidotus (Inland taipan).